Reading from the N-terminus, the 380-residue chain is 8-amino-7-oxononanoate synthase (380 aa).

Substrate is bound at residue R26. 104–105 lines the pyridoxal 5'-phosphate pocket; that stretch reads GY. H129 provides a ligand contact to substrate. Pyridoxal 5'-phosphate contacts are provided by residues S175, 200-203, and 232-235; these read DEAH and TLSK. K235 is modified (N6-(pyridoxal phosphate)lysine). T345 lines the substrate pocket.

It belongs to the class-II pyridoxal-phosphate-dependent aminotransferase family. BioF subfamily. Homodimer. Requires pyridoxal 5'-phosphate as cofactor.

It catalyses the reaction 6-carboxyhexanoyl-[ACP] + L-alanine + H(+) = (8S)-8-amino-7-oxononanoate + holo-[ACP] + CO2. It participates in cofactor biosynthesis; biotin biosynthesis. Functionally, catalyzes the decarboxylative condensation of pimeloyl-[acyl-carrier protein] and L-alanine to produce 8-amino-7-oxononanoate (AON), [acyl-carrier protein], and carbon dioxide. The polypeptide is 8-amino-7-oxononanoate synthase (Mycolicibacterium vanbaalenii (strain DSM 7251 / JCM 13017 / BCRC 16820 / KCTC 9966 / NRRL B-24157 / PYR-1) (Mycobacterium vanbaalenii)).